We begin with the raw amino-acid sequence, 130 residues long: Protein AUXIN-REGULATED GENE INVOLVED IN ORGAN SIZE (130 aa).

The tract at residues 65-116 (FSLESLFLLVGLTASLLILPLVLPPLPPPPFMLLLVPIGIMVLLVVLAFMPS) is organ Size Related (OSR) domain. The next 2 helical transmembrane spans lie at 70 to 90 (LFLLVGLTASLLILPLVLPPL) and 94 to 114 (PFMLLLVPIGIMVLLVVLAFM).

The protein belongs to the plant organ size related (OSR) protein family. In terms of tissue distribution, mostly expressed in flowers, inflorescence stems, leaf primordia and young leaves, and, to a lower extent, in siliques, cotyledon vascular bundles, roots (pericycle and root tips) and mature leaves.

It is found in the membrane. It localises to the nucleus. The protein resides in the cytoplasm. Its subcellular location is the endoplasmic reticulum. Its function is as follows. Promotes cell proliferation-dependent organ growth. Takes part in the AXR1-dependent auxin signaling pathway that requires ANT during organogenesis. In Arabidopsis thaliana (Mouse-ear cress), this protein is Protein AUXIN-REGULATED GENE INVOLVED IN ORGAN SIZE (ARGOS).